Consider the following 181-residue polypeptide: Adenine phosphoribosyltransferase (181 aa).

Belongs to the purine/pyrimidine phosphoribosyltransferase family. Homodimer.

It localises to the cytoplasm. It carries out the reaction AMP + diphosphate = 5-phospho-alpha-D-ribose 1-diphosphate + adenine. The protein operates within purine metabolism; AMP biosynthesis via salvage pathway; AMP from adenine: step 1/1. Catalyzes a salvage reaction resulting in the formation of AMP, that is energically less costly than de novo synthesis. The protein is Adenine phosphoribosyltransferase of Brucella suis (strain ATCC 23445 / NCTC 10510).